Here is a 272-residue protein sequence, read N- to C-terminus: Endogenous Bornavirus-like nucleoprotein 2 (272 aa).

Residues 48 to 70 are disordered; the sequence is MSHLRKDSQPSSPGDDAMDRSGL.

In terms of biological role, may act as an RNA-binding protein. The C-terminal region is highly homologous to the bornavirus nucleocapsid N protein that binds viral RNA and oligomerizes. The viral protein also possesses a nuclear import and a nuclear export signal. These 2 signals seem absent in EBLN-2 supporting an unrelated function in Human. The sequence is that of Endogenous Bornavirus-like nucleoprotein 2 (EBLN2) from Homo sapiens (Human).